We begin with the raw amino-acid sequence, 452 residues long: Putative tripartite motif-containing protein 49B (452 aa).

The segment at 15-56 adopts an RING-type zinc-finger fold; sequence CPICMNYFIDPVTIDCGHSFCRPCFYLNWKDSPFLVQCSECT. The segment at 88–129 adopts a B box-type zinc-finger fold; sequence SEEQMCGTHRETKKMFCEVDRSLLCLLCSSSQEHRDHRHCPI. Cys93, His96, Cys115, and His121 together coordinate Zn(2+). The 184-residue stretch at 269 to 452 folds into the B30.2/SPRY domain; that stretch reads ELSAGPITGL…LRPIFCCIHF (184 aa).

It belongs to the TRIM/RBCC family.

The polypeptide is Putative tripartite motif-containing protein 49B (TRIM49B) (Homo sapiens (Human)).